The following is a 205-amino-acid chain: Small ribosomal subunit protein uS4 (205 aa).

A disordered region spans residues 18-45 (NIWGRPKSPVNRREYGPGQHGQRRKGKL). Residues 94 to 157 (RRLDTVVYRA…KQLAFVLEAS (64 aa)) form the S4 RNA-binding domain.

It belongs to the universal ribosomal protein uS4 family. As to quaternary structure, part of the 30S ribosomal subunit. Contacts protein S5. The interaction surface between S4 and S5 is involved in control of translational fidelity.

In terms of biological role, one of the primary rRNA binding proteins, it binds directly to 16S rRNA where it nucleates assembly of the body of the 30S subunit. With S5 and S12 plays an important role in translational accuracy. This chain is Small ribosomal subunit protein uS4, found in Rhodopseudomonas palustris (strain BisA53).